The following is a 194-amino-acid chain: Archaetidylinositol phosphate synthase (194 aa).

The next 2 membrane-spanning stretches (helical) occupy residues 32–51 (IYTLASPVAAAAALPAWLYI) and 58–78 (LLIALSLLLDAVDGAVARFTG). Aspartate 67, aspartate 70, aspartate 88, and aspartate 92 together coordinate Mg(2+). Aspartate 92 functions as the Proton acceptor in the catalytic mechanism. 3 helical membrane passes run 103–123 (LYIAGVHPLIVIAMLSGGLIV), 150–170 (IAILAILAISIYNLQTALALA), and 172–192 (AAAVLVWITVIQRMVYIAGEL).

The protein belongs to the CDP-alcohol phosphatidyltransferase class-I family. Mn(2+) is required as a cofactor. Requires Mg(2+) as cofactor.

It is found in the cell membrane. It catalyses the reaction CDP-2,3-bis-O-(phytanyl)-sn-glycerol + 1D-myo-inositol 3-phosphate = saturated 1-archaetidyl-1D-myo-inositol 3-phosphate + CMP + H(+). It participates in lipid metabolism; phospholipid metabolism. In terms of biological role, catalyzes the formation of archaetidylinositol phosphate (AIP) from CDP-archaeol (CDP-ArOH or CDP-2,3-bis-(O-phytanyl)-sn-glycerol) and 1L-myo-inositol 1-phosphate (IP or 1D-myo-inositol 3-phosphate). AIP is a precursor of archaetidyl-myo-inositol (AI), an ether-type inositol phospholipid ubiquitously distributed in archaea membranes and essential for glycolipid biosynthesis in archaea. This Aeropyrum pernix (strain ATCC 700893 / DSM 11879 / JCM 9820 / NBRC 100138 / K1) protein is Archaetidylinositol phosphate synthase.